Consider the following 517-residue polypeptide: UDP-N-acetylmuramoylalanine--D-glutamate ligase (517 aa).

An ATP-binding site is contributed by 143–149 (GTNGKTT).

The protein belongs to the MurCDEF family.

It localises to the cytoplasm. The catalysed reaction is UDP-N-acetyl-alpha-D-muramoyl-L-alanine + D-glutamate + ATP = UDP-N-acetyl-alpha-D-muramoyl-L-alanyl-D-glutamate + ADP + phosphate + H(+). It functions in the pathway cell wall biogenesis; peptidoglycan biosynthesis. Cell wall formation. Catalyzes the addition of glutamate to the nucleotide precursor UDP-N-acetylmuramoyl-L-alanine (UMA). The chain is UDP-N-acetylmuramoylalanine--D-glutamate ligase from Leifsonia xyli subsp. xyli (strain CTCB07).